We begin with the raw amino-acid sequence, 232 residues long: UPF0758 protein EF_2926 (232 aa).

The MPN domain maps to 107–229 (KVTSSQQVAQ…YISLREENFF (123 aa)). Residues histidine 178, histidine 180, and aspartate 191 each coordinate Zn(2+). The JAMM motif signature appears at 178–191 (HNHPSGNPTPSPQD).

This sequence belongs to the UPF0758 family.

In Enterococcus faecalis (strain ATCC 700802 / V583), this protein is UPF0758 protein EF_2926.